The chain runs to 181 residues: Large ribosomal subunit protein uL10 (181 aa).

Belongs to the universal ribosomal protein uL10 family. Part of the ribosomal stalk of the 50S ribosomal subunit. The N-terminus interacts with L11 and the large rRNA to form the base of the stalk. The C-terminus forms an elongated spine to which L12 dimers bind in a sequential fashion forming a multimeric L10(L12)X complex.

Forms part of the ribosomal stalk, playing a central role in the interaction of the ribosome with GTP-bound translation factors. This Amoebophilus asiaticus (strain 5a2) protein is Large ribosomal subunit protein uL10.